A 250-amino-acid chain; its full sequence is Prolactin-7A2 (250 aa).

The signal sequence occupies residues 1 to 29; the sequence is MQLSFSRPRPWTLLLMVVSNLLLWENVSS. Residues N26, N35, N102, and N134 are each glycosylated (N-linked (GlcNAc...) asparagine). 2 disulfides stabilise this stretch: C100–C215 and C232–C241.

This sequence belongs to the somatotropin/prolactin family. In terms of tissue distribution, expression restricted to placental tissues. Trophoblast giant cells are found to be the major source.

It is found in the secreted. The chain is Prolactin-7A2 (Prl7a2) from Rattus norvegicus (Rat).